The sequence spans 1039 residues: Beta-galactosidase (1039 aa).

2 residues coordinate substrate: Asn-103 and Asp-201. Residue Asp-201 participates in Na(+) binding. Glu-415, His-417, and Glu-460 together coordinate Mg(2+). Residues Glu-460 and 536–539 each bind substrate; that span reads EYAH. The active-site Proton donor is Glu-460. Catalysis depends on Glu-536, which acts as the Nucleophile. Asn-596 contributes to the Mg(2+) binding site. Phe-600 and Asn-603 together coordinate Na(+). Residues Asn-603 and Trp-1012 each contribute to the substrate site.

This sequence belongs to the glycosyl hydrolase 2 family. As to quaternary structure, homotetramer. Requires Mg(2+) as cofactor. The cofactor is Na(+).

The catalysed reaction is Hydrolysis of terminal non-reducing beta-D-galactose residues in beta-D-galactosides.. With respect to regulation, inhibited by zinc, copper and nickel ions. Activated by 2-mercaptoethanol and inhibited by EDTA in vitro. This is Beta-galactosidase (lacZ) from Pseudoalteromonas haloplanktis (Alteromonas haloplanktis).